A 157-amino-acid chain; its full sequence is Fimbrial protein Q (157 aa).

The propeptide occupies 1–6 (MNAQKG). Residue Phe-7 is modified to N-methylphenylalanine. Cysteines 136 and 155 form a disulfide.

The protein belongs to the N-Me-Phe pilin family. As to quaternary structure, the pili are polar flexible filaments of about 5.4 nanometers diameter and 2.5 micrometers average length; they consist of only a single polypeptide chain arranged in a helical configuration of five subunits per turn in the assembled pilus.

The protein resides in the fimbrium. This is Fimbrial protein Q (tfpQ) from Moraxella bovis.